A 457-amino-acid polypeptide reads, in one-letter code: UDP-N-acetylmuramate--L-alanine ligase (457 aa).

Residue 109–115 (GTDGKTT) participates in ATP binding.

It belongs to the MurCDEF family.

It localises to the cytoplasm. It carries out the reaction UDP-N-acetyl-alpha-D-muramate + L-alanine + ATP = UDP-N-acetyl-alpha-D-muramoyl-L-alanine + ADP + phosphate + H(+). It participates in cell wall biogenesis; peptidoglycan biosynthesis. Its function is as follows. Cell wall formation. The polypeptide is UDP-N-acetylmuramate--L-alanine ligase (Thermotoga neapolitana (strain ATCC 49049 / DSM 4359 / NBRC 107923 / NS-E)).